A 647-amino-acid chain; its full sequence is DNA topoisomerase 4 subunit B (647 aa).

ATP is bound by residues Y11, N51, D78, 118–124 (GLHGVGS), and K344. Basic and acidic residues predominate over residues 391 to 401 (AARKARDESRN). The disordered stretch occupies residues 391–421 (AARKARDESRNGKKNKKDKGLLSGKLTPAQS). Residues 427-541 (NELYLVEGDS…AGHVYIALPP (115 aa)) form the Toprim domain. E433, D506, and D508 together coordinate Mg(2+).

Belongs to the type II topoisomerase family. ParE type 2 subfamily. As to quaternary structure, heterotetramer composed of ParC and ParE. Requires Mg(2+) as cofactor. It depends on Mn(2+) as a cofactor. Ca(2+) serves as cofactor.

It catalyses the reaction ATP-dependent breakage, passage and rejoining of double-stranded DNA.. Inhibited by quinolones, such as levofloxacin. Functionally, topoisomerase IV is essential for chromosome segregation. It relaxes supercoiled DNA. Performs the decatenation events required during the replication of a circular DNA molecule. The sequence is that of DNA topoisomerase 4 subunit B from Streptococcus pneumoniae serotype 4 (strain ATCC BAA-334 / TIGR4).